Reading from the N-terminus, the 122-residue chain is Ribosomal protein eL22-like (122 aa).

Phosphoserine is present on residues S112, S118, and S120.

Belongs to the eukaryotic ribosomal protein eL22 family.

The chain is Ribosomal protein eL22-like (RPL22L1) from Homo sapiens (Human).